We begin with the raw amino-acid sequence, 339 residues long: Very-long-chain 3-oxoacyl-CoA reductase (339 aa).

Residues 21–41 (WTTFLLALGSFNALRIIYQTL) form a helical membrane-spanning segment. Valine 67, asparagine 96, aspartate 121, asparagine 148, tyrosine 215, lysine 219, valine 248, and serine 250 together coordinate NADP(+). Tyrosine 215 (proton acceptor) is an active-site residue. The Lowers pKa of active site Tyr role is filled by lysine 219.

The protein belongs to the short-chain dehydrogenases/reductases (SDR) family.

Its subcellular location is the endoplasmic reticulum membrane. The catalysed reaction is a very-long-chain (3R)-3-hydroxyacyl-CoA + NADP(+) = a very-long-chain 3-oxoacyl-CoA + NADPH + H(+). It participates in lipid metabolism; fatty acid biosynthesis. Functionally, component of the microsomal membrane bound fatty acid elongation system, which produces the 26-carbon very long-chain fatty acids (VLCFA) from palmitate. Catalyzes the reduction of the 3-ketoacyl-CoA intermediate that is formed in each cycle of fatty acid elongation. VLCFAs serve as precursors for ceramide and sphingolipids. The polypeptide is Very-long-chain 3-oxoacyl-CoA reductase (Coprinopsis cinerea (strain Okayama-7 / 130 / ATCC MYA-4618 / FGSC 9003) (Inky cap fungus)).